We begin with the raw amino-acid sequence, 164 residues long: Ubiquitin-fold modifier-conjugating enzyme 1 (164 aa).

Catalysis depends on Cys-116, which acts as the Glycyl thioester intermediate.

Belongs to the ubiquitin-conjugating enzyme family. UFC1 subfamily.

In terms of biological role, E2-like enzyme which forms an intermediate with UFM1 via a thioester linkage. This Drosophila willistoni (Fruit fly) protein is Ubiquitin-fold modifier-conjugating enzyme 1.